A 291-amino-acid chain; its full sequence is uncharacterized protein (291 aa).

Residues 1 to 55 (MRTHDIPRSPLVGHKKNAAPDGIGASRACCPARENEPFKKGSTNSRGGGVEWSRS) form a disordered region. 2 consecutive transmembrane segments (helical) span residues 74 to 96 (WWAVGPVLGICAGVWGAAHPVHA) and 188 to 210 (YYYLAIPVALTAGYTVAFWRIRL).

The protein to T.pallidum TP_0733.

It is found in the cell membrane. This is an uncharacterized protein from Treponema pallidum (strain Nichols).